Reading from the N-terminus, the 235-residue chain is Protein GrpE (235 aa).

2 stretches are compositionally biased toward basic and acidic residues: residues Met1–Asn16 and Asn24–Gln35. The tract at residues Met1–Lys51 is disordered.

Belongs to the GrpE family. Homodimer.

It localises to the cytoplasm. Functionally, participates actively in the response to hyperosmotic and heat shock by preventing the aggregation of stress-denatured proteins, in association with DnaK and GrpE. It is the nucleotide exchange factor for DnaK and may function as a thermosensor. Unfolded proteins bind initially to DnaJ; upon interaction with the DnaJ-bound protein, DnaK hydrolyzes its bound ATP, resulting in the formation of a stable complex. GrpE releases ADP from DnaK; ATP binding to DnaK triggers the release of the substrate protein, thus completing the reaction cycle. Several rounds of ATP-dependent interactions between DnaJ, DnaK and GrpE are required for fully efficient folding. The polypeptide is Protein GrpE (Malacoplasma penetrans (strain HF-2) (Mycoplasma penetrans)).